The following is a 133-amino-acid chain: Probable mitochondrial pyruvate carrier 2 (133 aa).

3 helical membrane passes run 40–57 (VFFW…AGLA), 73–91 (ALFA…ITPI), and 100–116 (FFVM…IAHY).

Belongs to the mitochondrial pyruvate carrier (MPC) (TC 2.A.105) family.

The protein localises to the mitochondrion inner membrane. May mediate the uptake of pyruvate into mitochondria. The chain is Probable mitochondrial pyruvate carrier 2 from Caenorhabditis elegans.